A 604-amino-acid polypeptide reads, in one-letter code: Serine protease 56 (604 aa).

A signal peptide spans 1-22 (MPLAMLLLLLLLLSPDSQTAHG). Residues 70-94 (CQGPGRPRPQAPLLQDPPEPVQCGE) are disordered. The span at 75 to 89 (RPRPQAPLLQDPPEP) shows a compositional bias: pro residues. The N-linked (GlcNAc...) asparagine glycan is linked to Asn101. Residues 109-341 (IVGGSTAPSG…FKDWLQEQMS (233 aa)) form the Peptidase S1 domain. A disulfide bridge connects residues Cys134 and Cys150. Catalysis depends on charge relay system residues His149 and Asp195. 3 disulfide bridges follow: Cys229–Cys296, Cys260–Cys275, and Cys286–Cys317. Ser290 functions as the Charge relay system in the catalytic mechanism. Disordered stretches follow at residues 424–452 (RPGL…PREQ) and 578–604 (PQAP…PPVP).

Belongs to the peptidase S1 family. As to expression, expressed in the eye: present in the retina and in the optic nerve.

The protein localises to the endoplasmic reticulum membrane. Serine protease required during eye development. The sequence is that of Serine protease 56 (Prss56) from Mus musculus (Mouse).